We begin with the raw amino-acid sequence, 495 residues long: Probable leucine aminopeptidase 2 (495 aa).

A signal peptide spans 1–21; that stretch reads MKSQLLSLAVAVTTISQGVVG. In terms of domain architecture, PA spans 130–216; it reads MAELVVAKNN…SQEDGKNLAT (87 aa). N-linked (GlcNAc...) asparagine glycosylation is found at N142 and N235. 2 residues coordinate Zn(2+): H259 and D271. A glycan (N-linked (GlcNAc...) asparagine) is linked at N272. E303 (proton acceptor) is an active-site residue. The Zn(2+) site is built by E304 and D332. N352 carries an N-linked (GlcNAc...) asparagine glycan. H430 lines the Zn(2+) pocket.

The protein belongs to the peptidase M28 family. M28A subfamily. As to quaternary structure, monomer. Zn(2+) serves as cofactor.

It localises to the secreted. In terms of biological role, extracellular aminopeptidase that releases a wide variety of amino acids from natural peptides and contributes to pathogenicity. The protein is Probable leucine aminopeptidase 2 (LAP2) of Trichophyton verrucosum (strain HKI 0517).